The primary structure comprises 147 residues: Large ribosomal subunit protein uL15 (147 aa).

Residues 1–46 (MSIRLENLSYTPGARKEKHRKGRGHAAGKGKQAGRGQSGQKKRSTV) are disordered. Residues 16 to 28 (KEKHRKGRGHAAG) show a composition bias toward basic residues.

This sequence belongs to the universal ribosomal protein uL15 family. As to quaternary structure, part of the 50S ribosomal subunit.

Functionally, binds to the 23S rRNA. The chain is Large ribosomal subunit protein uL15 from Mesomycoplasma hyopneumoniae (strain 7448) (Mycoplasma hyopneumoniae).